Consider the following 103-residue polypeptide: MSSQKIRIRLKAFDYNLIDRSAQEIVETAKRTGAVVKGPVPLPTKIERFNVLRSPHVNKTSRDQLEIRTHLRLMDIVDPTDKTVDALMKLDLPAGVDVEIKLQ.

Belongs to the universal ribosomal protein uS10 family. Part of the 30S ribosomal subunit.

Functionally, involved in the binding of tRNA to the ribosomes. In Chromobacterium violaceum (strain ATCC 12472 / DSM 30191 / JCM 1249 / CCUG 213 / NBRC 12614 / NCIMB 9131 / NCTC 9757 / MK), this protein is Small ribosomal subunit protein uS10.